The sequence spans 579 residues: L-arabinonate dehydratase (579 aa).

Cys59 lines the [2Fe-2S] cluster pocket. Glu91 lines the Mg(2+) pocket. Cys127 lines the [2Fe-2S] cluster pocket. Residue Asp128 participates in Mg(2+) binding. A [2Fe-2S] cluster-binding site is contributed by Cys200. Glu453 is a binding site for Mg(2+).

This sequence belongs to the IlvD/Edd family. Homotetramer. The cofactor is [2Fe-2S] cluster. Mg(2+) is required as a cofactor.

The enzyme catalyses L-arabinonate = 2-dehydro-3-deoxy-L-arabinonate + H2O. It catalyses the reaction D-galactonate = 2-dehydro-3-deoxy-D-galactonate + H2O. It carries out the reaction D-fuconate = 2-dehydro-3-deoxy-D-fuconate + H2O. The protein operates within carbohydrate metabolism. Functionally, catalyzes the dehydration of L-arabinonate to 2-dehydro-3-deoxy-L-arabinonate during L-arabinose degradation. Can also dehydrate D-galactonate and D-fuconate with good catalytic efficiency. Has weak activity with D-xylonate and D-gluconate. The polypeptide is L-arabinonate dehydratase (Rhizobium leguminosarum bv. trifolii (strain WSM2304)).